The primary structure comprises 647 residues: Threonine--tRNA ligase (647 aa).

Positions 1–61 constitute a TGS domain; the sequence is MIKITFPDGA…EEDGSIEIVT (61 aa). The interval 240-538 is catalytic; the sequence is DHRKLGKELD…LIETYKGAFP (299 aa). Zn(2+) is bound by residues C334, H385, and H515.

This sequence belongs to the class-II aminoacyl-tRNA synthetase family. Homodimer. Zn(2+) is required as a cofactor.

The protein localises to the cytoplasm. It carries out the reaction tRNA(Thr) + L-threonine + ATP = L-threonyl-tRNA(Thr) + AMP + diphosphate + H(+). Functionally, catalyzes the attachment of threonine to tRNA(Thr) in a two-step reaction: L-threonine is first activated by ATP to form Thr-AMP and then transferred to the acceptor end of tRNA(Thr). Also edits incorrectly charged L-seryl-tRNA(Thr). This is Threonine--tRNA ligase from Streptococcus pyogenes serotype M4 (strain MGAS10750).